The chain runs to 852 residues: Probable LRR receptor-like serine/threonine-protein kinase At1g05700 (852 aa).

The N-terminal stretch at 1–25 (MEEFRFLYLIYSAAFALCLVVSVLA) is a signal peptide. Over 26–510 (QDQSGFISID…SCRKSNSKKL (485 aa)) the chain is Extracellular. Asparagine 138, asparagine 182, asparagine 231, asparagine 240, asparagine 258, asparagine 293, asparagine 400, asparagine 415, and asparagine 431 each carry an N-linked (GlcNAc...) asparagine glycan. 3 LRR repeats span residues 410 to 432 (RITSLNLSSSGLTGHISSSFSNL), 434 to 457 (MIQELDLSNNGLTGDIPEFLSKLK), and 458 to 479 (FLRVLNLENNTLTGSVPSELLE). Asparagine 466 carries an N-linked (GlcNAc...) asparagine glycan. A helical membrane pass occupies residues 511–531 (VIPLVASFAALFILLLLSGVF). Residues 532 to 852 (WRIRNRRNKS…LQREESNKNY (321 aa)) lie on the Cytoplasmic side of the membrane. Phosphothreonine is present on threonine 561. Residues 570–843 (NNFGQVLGKG…HIVRGLNECL (274 aa)) enclose the Protein kinase domain. ATP-binding positions include 576-584 (LGKGGFGTV) and lysine 597. Residue tyrosine 642 is modified to Phosphotyrosine. Aspartate 693 acts as the Proton acceptor in catalysis. Phosphoserine occurs at positions 697 and 727. Threonine 728 and threonine 733 each carry phosphothreonine.

This sequence belongs to the protein kinase superfamily. Ser/Thr protein kinase family.

It localises to the membrane. It carries out the reaction L-seryl-[protein] + ATP = O-phospho-L-seryl-[protein] + ADP + H(+). The enzyme catalyses L-threonyl-[protein] + ATP = O-phospho-L-threonyl-[protein] + ADP + H(+). In Arabidopsis thaliana (Mouse-ear cress), this protein is Probable LRR receptor-like serine/threonine-protein kinase At1g05700.